The sequence spans 552 residues: Chaperonin GroEL (552 aa).

ATP is bound by residues 29–32 (TAGP), Lys50, 86–90 (DGTTT), Gly417, and Asp499.

It belongs to the chaperonin (HSP60) family. In terms of assembly, forms a cylinder of 14 subunits composed of two heptameric rings stacked back-to-back. Interacts with the co-chaperonin GroES.

It is found in the cytoplasm. It carries out the reaction ATP + H2O + a folded polypeptide = ADP + phosphate + an unfolded polypeptide.. Its function is as follows. Together with its co-chaperonin GroES, plays an essential role in assisting protein folding. The GroEL-GroES system forms a nano-cage that allows encapsulation of the non-native substrate proteins and provides a physical environment optimized to promote and accelerate protein folding. In Ehrlichia canis (strain Jake), this protein is Chaperonin GroEL.